Here is a 631-residue protein sequence, read N- to C-terminus: DNA repair protein XRCC1 (631 aa).

At Ser142 the chain carries Phosphoserine. A Glycyl lysine isopeptide (Lys-Gly) (interchain with G-Cter in SUMO1); alternate cross-link involves residue Lys178. Lys178 is covalently cross-linked (Glycyl lysine isopeptide (Lys-Gly) (interchain with G-Cter in SUMO2); alternate). Thr200 is modified (phosphothreonine). Phosphoserine is present on residues Ser201, Ser206, and Ser228. Residues 225-238 (SSASPVPKVVGSSS) show a composition bias toward low complexity. The segment at 225–315 (SSASPVPKVV…PRGARTGPQE (91 aa)) is disordered. The span at 242 to 259 (EPPKGKRKLDLSLEDRKP) shows a compositional bias: basic and acidic residues. A Phosphoserine modification is found at Ser261. Residues 278–294 (PSRTPAAAPASTPAQRA) show a composition bias toward low complexity. Thr281 carries the post-translational modification Phosphothreonine. Residues 299 to 308 (PRGEGTEPRG) show a composition bias toward basic and acidic residues. The region spanning 315-403 (ELGKILQGVV…RRLPSRRYLM (89 aa)) is the BRCT 1 domain. Ser371, Ser408, Ser409, and Ser410 each carry phosphoserine. Positions 405–537 (GLGSSSEDEG…SEADLPIPEL (133 aa)) are disordered. Residues 415–426 (DSHSESGEDEAP) show a composition bias toward basic and acidic residues. 2 positions are modified to phosphoserine: Ser445 and Ser446. Phosphothreonine is present on residues Thr452 and Thr456. Phosphoserine is present on residues Ser460 and Ser484. Position 487 is a phosphothreonine (Thr487). The span at 490–501 (ELRRVAKQREQR) shows a compositional bias: basic and acidic residues. At Ser517 the chain carries Phosphoserine. 2 positions are modified to phosphothreonine: Thr518 and Thr522. Residues 536–627 (ELPDFFEGKH…KLLPHQLYGV (92 aa)) enclose the BRCT 2 domain.

Homodimer. Interacts with polynucleotide kinase (PNK), DNA polymerase-beta (POLB) and DNA ligase III (LIG3). Interacts with APTX and APLF. Interacts with APEX1; the interaction is induced by SIRT1 and increases with the acetylated form of APEX1. Interacts with (poly-ADP-ribosylated) PARP1. In terms of processing, phosphorylation of Ser-371 causes dimer dissociation. Phosphorylation by CK2 promotes interaction with APTX and APLF. Sumoylated.

The protein resides in the nucleus. Its subcellular location is the chromosome. In terms of biological role, scaffold protein involved in DNA single-strand break repair by mediating the assembly of DNA break repair protein complexes. Negatively regulates ADP-ribosyltransferase activity of PARP1 during base-excision repair in order to prevent excessive PARP1 activity. Recognizes and binds poly-ADP-ribose chains: specifically binds auto-poly-ADP-ribosylated PARP1, limiting its activity. This chain is DNA repair protein XRCC1 (Xrcc1), found in Mus musculus (Mouse).